The sequence spans 325 residues: Tagatose 1,6-diphosphate aldolase 1 (325 aa).

It belongs to the aldolase LacD family.

The catalysed reaction is D-tagatofuranose 1,6-bisphosphate = D-glyceraldehyde 3-phosphate + dihydroxyacetone phosphate. The protein operates within carbohydrate metabolism; D-tagatose 6-phosphate degradation; D-glyceraldehyde 3-phosphate and glycerone phosphate from D-tagatose 6-phosphate: step 2/2. This is Tagatose 1,6-diphosphate aldolase 1 from Streptococcus agalactiae serotype III (strain NEM316).